A 444-amino-acid chain; its full sequence is Argininosuccinate synthase (444 aa).

Residues 18–26 (AFSGGLDTS) and alanine 44 each bind ATP. Residue tyrosine 100 participates in L-citrulline binding. ATP contacts are provided by glycine 130 and threonine 132. Residues threonine 132, asparagine 136, and aspartate 137 each contribute to the L-aspartate site. Asparagine 136 is an L-citrulline binding site. Aspartate 137 contributes to the ATP binding site. Arginine 140 and serine 193 together coordinate L-citrulline. Aspartate 195 lines the ATP pocket. Positions 202, 204, and 281 each coordinate L-citrulline.

This sequence belongs to the argininosuccinate synthase family. Type 2 subfamily. In terms of assembly, homotetramer.

Its subcellular location is the cytoplasm. The enzyme catalyses L-citrulline + L-aspartate + ATP = 2-(N(omega)-L-arginino)succinate + AMP + diphosphate + H(+). Its pathway is amino-acid biosynthesis; L-arginine biosynthesis; L-arginine from L-ornithine and carbamoyl phosphate: step 2/3. This Mannheimia succiniciproducens (strain KCTC 0769BP / MBEL55E) protein is Argininosuccinate synthase.